The chain runs to 148 residues: Receptor activity-modifying protein 1 (148 aa).

An N-terminal signal peptide occupies residues 1-26; that stretch reads MARGLRGLPRRGLWLLLVNHLFLATA. Disulfide bonds link C27–C82, C40–C72, and C57–C104. Topologically, residues 27-118 are extracellular; that stretch reads CQDTDHAALL…RALQDPPSSV (92 aa). Residues 119 to 140 traverse the membrane as a helical segment; the sequence is LCPFIVVPILATLLMTALVVWR. The Cytoplasmic portion of the chain corresponds to 141-148; the sequence is SKRPEGIV.

The protein belongs to the RAMP family. In terms of assembly, heterodimer of CALCRL and RAMP1; the interaction induces allosteric modulation of CALCRL function and CGRP1/CALCA and CGRP2/CALCB ligand specificity. Heterodimer of CALCR and RAMP1; interaction forms the AMYR1 receptor complex for amylin/IAPP and CGRP1/CALCA ligands.

The protein resides in the cell membrane. Its function is as follows. Accessory protein that interacts with and modulates the function of G-protein coupled receptors including calcitonin gene-related peptide type 1 receptor (CALCRL) and calcitonin receptor (CALCR). Required for the transport of CALCRL to the plasma membrane. Together with CALCRL, form the receptor complex for the calcitonin gene-related peptides CGRP1/CALCA and CGRP2/CALCB. Together with CALCR, form the AMYR1 receptor complex for amylin/IAPP and CGRP1/CALCA. The protein is Receptor activity-modifying protein 1 (RAMP1) of Sus scrofa (Pig).